We begin with the raw amino-acid sequence, 183 residues long: Ribosome-recycling factor (183 aa).

This sequence belongs to the RRF family.

Its subcellular location is the cytoplasm. Responsible for the release of ribosomes from messenger RNA at the termination of protein biosynthesis. May increase the efficiency of translation by recycling ribosomes from one round of translation to another. The sequence is that of Ribosome-recycling factor from Ureaplasma urealyticum serovar 10 (strain ATCC 33699 / Western).